The sequence spans 122 residues: Large ribosomal subunit protein uL14 (122 aa).

The protein belongs to the universal ribosomal protein uL14 family. In terms of assembly, part of the 50S ribosomal subunit. Forms a cluster with proteins L3 and L19. In the 70S ribosome, L14 and L19 interact and together make contacts with the 16S rRNA in bridges B5 and B8.

In terms of biological role, binds to 23S rRNA. Forms part of two intersubunit bridges in the 70S ribosome. The sequence is that of Large ribosomal subunit protein uL14 from Frankia alni (strain DSM 45986 / CECT 9034 / ACN14a).